The sequence spans 276 residues: Rhomboid protease GlpG (276 aa).

A run of 6 helical transmembrane segments spans residues 94 to 114, 142 to 162, 169 to 189, 192 to 212, 229 to 249, and 250 to 270; these read GPFT…MNVV, ALMH…WYLG, LGSG…GYVQ, FSGP…GYAW, LITF…GMSI, and ANGA…ADTL. Ser-201 (nucleophile) is an active-site residue. His-254 is a catalytic residue.

The protein belongs to the peptidase S54 family.

It is found in the cell inner membrane. It carries out the reaction Cleaves type-1 transmembrane domains using a catalytic dyad composed of serine and histidine that are contributed by different transmembrane domains.. Its function is as follows. Rhomboid-type serine protease that catalyzes intramembrane proteolysis. This Enterobacter sp. (strain 638) protein is Rhomboid protease GlpG.